A 93-amino-acid polypeptide reads, in one-letter code: MGRSLKKGPFVDEHLMKKVEAQANDEKKKVIKTWSRRSTIFPSFIGYTIAVYDGRKHVPVYIQEDMVGHKLGEFAPTRTYKGHAADDKKTRRK.

The protein belongs to the universal ribosomal protein uS19 family.

Functionally, protein S19 forms a complex with S13 that binds strongly to the 16S ribosomal RNA. The polypeptide is Small ribosomal subunit protein uS19 (Streptococcus gordonii (strain Challis / ATCC 35105 / BCRC 15272 / CH1 / DL1 / V288)).